The sequence spans 168 residues: S-ribosylhomocysteine lyase (168 aa).

Fe cation is bound by residues H54, H58, and C128.

Belongs to the LuxS family. In terms of assembly, homodimer. The cofactor is Fe cation.

The enzyme catalyses S-(5-deoxy-D-ribos-5-yl)-L-homocysteine = (S)-4,5-dihydroxypentane-2,3-dione + L-homocysteine. Involved in the synthesis of autoinducer 2 (AI-2) which is secreted by bacteria and is used to communicate both the cell density and the metabolic potential of the environment. The regulation of gene expression in response to changes in cell density is called quorum sensing. Catalyzes the transformation of S-ribosylhomocysteine (RHC) to homocysteine (HC) and 4,5-dihydroxy-2,3-pentadione (DPD). The sequence is that of S-ribosylhomocysteine lyase from Neisseria gonorrhoeae (strain ATCC 700825 / FA 1090).